Reading from the N-terminus, the 462-residue chain is 3beta-hydroxysteroid dehydrogenase/Delta(5)-Delta(4) isomerase 1 (462 aa).

Residues 51 to 56 (GGAGHL), Tyr-220, and Lys-224 contribute to the NAD(+) site. Residue Lys-224 is the Proton donor of the active site. The next 2 helical transmembrane spans lie at 321–341 (VGTF…SSMI) and 428–448 (VAVL…FTFW).

Belongs to the 3-beta-HSD family. As to expression, expressed exclusively in the neuron-like XXX(L/R) cells through all four larval stages and becomes fainter in adults.

The protein localises to the membrane. The catalysed reaction is a 3beta-hydroxy-Delta(5)-steroid + NAD(+) = a 3-oxo-Delta(5)-steroid + NADH + H(+). It carries out the reaction cholesterol + NAD(+) = cholest-5-en-3-one + NADH + H(+). The enzyme catalyses a 3-oxo-Delta(5)-steroid = a 3-oxo-Delta(4)-steroid. It catalyses the reaction cholest-5-en-3-one = cholest-4-en-3-one. The protein operates within steroid hormone biosynthesis; dafachronic acid biosynthesis. Its function is as follows. Hydroxysteroid dehydrogenase involved in the biosynthesis of dafrachonic acids. Catalyzes the dehydrogenation of cholesterol or its derivatives and the isomerization of the double carbon bond on the sterol ring. Modifies sterols into a Delta(4)-3-keto-sterols such as cholest-4-en-3-one, precursor of Delta(4)-dafachronic acid. Contributes to the production of Delta(7)-dafachronic acid in the XXX cells. Dafachronic acids act as ligands and bind directly to the nuclear hormone receptor (NHR) daf-12 suppressing dauer formation and inducing reproductive growth. Acts in parallel to AKT-1 to promote reproductive development via DAF-16/FoxO and DAF-12. The protein is 3beta-hydroxysteroid dehydrogenase/Delta(5)-Delta(4) isomerase 1 of Caenorhabditis elegans.